The primary structure comprises 284 residues: Bifunctional protein FolD (284 aa).

NADP(+)-binding positions include 166 to 168 and I232; that span reads GAS.

The protein belongs to the tetrahydrofolate dehydrogenase/cyclohydrolase family. Homodimer.

The enzyme catalyses (6R)-5,10-methylene-5,6,7,8-tetrahydrofolate + NADP(+) = (6R)-5,10-methenyltetrahydrofolate + NADPH. The catalysed reaction is (6R)-5,10-methenyltetrahydrofolate + H2O = (6R)-10-formyltetrahydrofolate + H(+). It functions in the pathway one-carbon metabolism; tetrahydrofolate interconversion. In terms of biological role, catalyzes the oxidation of 5,10-methylenetetrahydrofolate to 5,10-methenyltetrahydrofolate and then the hydrolysis of 5,10-methenyltetrahydrofolate to 10-formyltetrahydrofolate. This chain is Bifunctional protein FolD, found in Pseudomonas putida (strain W619).